The sequence spans 427 residues: Enolase (427 aa).

Residue glutamine 162 coordinates (2R)-2-phosphoglycerate. The Proton donor role is filled by glutamate 204. Aspartate 241, glutamate 282, and aspartate 309 together coordinate Mg(2+). Positions 334, 363, 364, and 385 each coordinate (2R)-2-phosphoglycerate. The active-site Proton acceptor is lysine 334.

The protein belongs to the enolase family. It depends on Mg(2+) as a cofactor.

The protein resides in the cytoplasm. It localises to the secreted. It is found in the cell surface. The catalysed reaction is (2R)-2-phosphoglycerate = phosphoenolpyruvate + H2O. Its pathway is carbohydrate degradation; glycolysis; pyruvate from D-glyceraldehyde 3-phosphate: step 4/5. Functionally, catalyzes the reversible conversion of 2-phosphoglycerate (2-PG) into phosphoenolpyruvate (PEP). It is essential for the degradation of carbohydrates via glycolysis. The protein is Enolase of Parafrankia sp. (strain EAN1pec).